Consider the following 430-residue polypeptide: Adenylosuccinate synthetase (430 aa).

Residues 12–18 (GDEGKGK) and 40–42 (GHT) contribute to the GTP site. D13 serves as the catalytic Proton acceptor. Mg(2+) contacts are provided by D13 and G40. IMP is bound by residues 13-16 (DEGK), 38-41 (NAGH), T130, R144, Q224, T239, and R303. H41 (proton donor) is an active-site residue. 299–305 (VNTGRKR) contributes to the substrate binding site. Residues R305, 331–333 (KLD), and 413–415 (STS) contribute to the GTP site.

The protein belongs to the adenylosuccinate synthetase family. In terms of assembly, homodimer. It depends on Mg(2+) as a cofactor.

Its subcellular location is the cytoplasm. The enzyme catalyses IMP + L-aspartate + GTP = N(6)-(1,2-dicarboxyethyl)-AMP + GDP + phosphate + 2 H(+). It functions in the pathway purine metabolism; AMP biosynthesis via de novo pathway; AMP from IMP: step 1/2. Functionally, plays an important role in the de novo pathway of purine nucleotide biosynthesis. Catalyzes the first committed step in the biosynthesis of AMP from IMP. This Nitrobacter winogradskyi (strain ATCC 25391 / DSM 10237 / CIP 104748 / NCIMB 11846 / Nb-255) protein is Adenylosuccinate synthetase.